The sequence spans 391 residues: 3-demethoxyubiquinol 3-hydroxylase (391 aa).

It belongs to the UbiH/COQ6 family. As to quaternary structure, component of the Ubi complex metabolon, which regroups five ubiquinone biosynthesis proteins (UbiE, UbiF, UbiG, UbiH and UbiI) and two accessory factors (UbiK and the lipid-binding protein UbiJ). Requires FAD as cofactor.

The protein resides in the cytoplasm. It catalyses the reaction a 5-methoxy-2-methyl-3-(all-trans-polyprenyl)benzene-1,4-diol + AH2 + O2 = a 3-demethylubiquinol + A + H2O. Its pathway is cofactor biosynthesis; ubiquinone biosynthesis. Its function is as follows. Catalyzes the hydroxylation of 2-octaprenyl-3-methyl-6-methoxy-1,4-benzoquinol during ubiquinone biosynthesis. This chain is 3-demethoxyubiquinol 3-hydroxylase (ubiF), found in Escherichia coli (strain K12).